Reading from the N-terminus, the 113-residue chain is Antimicrobial peptide microplusin (113 aa).

An N-terminal signal peptide occupies residues Met-1–Ala-19. 3 disulfide bridges follow: Cys-25/Cys-71, Cys-38/Cys-99, and Cys-60/Cys-65.

Its subcellular location is the secreted. Has bacteriostatic activity against Gram-positive bacteria, but not against Gram-negative bacteria. Has fungistatic activity against some but not all fungi. Binds and sequesters copper and iron ions. Copper-chelating activity is crucial for antimicrobial activity against M.luteus. This chain is Antimicrobial peptide microplusin, found in Argas monolakensis (Mono lake bird tick).